The chain runs to 572 residues: Methionine--tRNA ligase (572 aa).

The 'HIGH' region motif lies at 11 to 21 (PYVNHVPHLGT). Residues C143, C146, C156, and C159 each contribute to the Zn(2+) site. The 'KMSKS' region motif lies at 334–338 (QFSKS). K337 provides a ligand contact to ATP.

Belongs to the class-I aminoacyl-tRNA synthetase family. MetG type 1 subfamily. Zn(2+) serves as cofactor.

It is found in the cytoplasm. It carries out the reaction tRNA(Met) + L-methionine + ATP = L-methionyl-tRNA(Met) + AMP + diphosphate. In terms of biological role, is required not only for elongation of protein synthesis but also for the initiation of all mRNA translation through initiator tRNA(fMet) aminoacylation. The protein is Methionine--tRNA ligase (metG) of Aeropyrum pernix (strain ATCC 700893 / DSM 11879 / JCM 9820 / NBRC 100138 / K1).